The primary structure comprises 240 residues: Ribitol-5-phosphate cytidylyltransferase (240 aa).

CTP contacts are provided by residues 8–11 (FAGG) and 81–87 (GETGQMS).

Belongs to the IspD/TarI cytidylyltransferase family. TarI subfamily.

It carries out the reaction D-ribitol 5-phosphate + CTP + H(+) = CDP-L-ribitol + diphosphate. Its pathway is cell wall biogenesis; poly(ribitol phosphate) teichoic acid biosynthesis. Catalyzes the transfer of the cytidylyl group of CTP to D-ribitol 5-phosphate. The chain is Ribitol-5-phosphate cytidylyltransferase from Streptococcus agalactiae serotype V (strain ATCC BAA-611 / 2603 V/R).